The chain runs to 430 residues: Enolase (430 aa).

Residue Gln-163 coordinates (2R)-2-phosphoglycerate. Glu-205 serves as the catalytic Proton donor. The Mg(2+) site is built by Asp-242, Glu-285, and Asp-312. The (2R)-2-phosphoglycerate site is built by Lys-337, Arg-366, Ser-367, and Lys-388. Lys-337 functions as the Proton acceptor in the catalytic mechanism.

This sequence belongs to the enolase family. Mg(2+) is required as a cofactor.

Its subcellular location is the cytoplasm. It localises to the secreted. The protein resides in the cell surface. The catalysed reaction is (2R)-2-phosphoglycerate = phosphoenolpyruvate + H2O. The protein operates within carbohydrate degradation; glycolysis; pyruvate from D-glyceraldehyde 3-phosphate: step 4/5. Catalyzes the reversible conversion of 2-phosphoglycerate (2-PG) into phosphoenolpyruvate (PEP). It is essential for the degradation of carbohydrates via glycolysis. The protein is Enolase of Maridesulfovibrio salexigens (strain ATCC 14822 / DSM 2638 / NCIMB 8403 / VKM B-1763) (Desulfovibrio salexigens).